A 242-amino-acid polypeptide reads, in one-letter code: Probable transcriptional regulatory protein PXO_01555 (242 aa).

It belongs to the TACO1 family.

It localises to the cytoplasm. The polypeptide is Probable transcriptional regulatory protein PXO_01555 (Xanthomonas oryzae pv. oryzae (strain PXO99A)).